Here is a 265-residue protein sequence, read N- to C-terminus: ATP synthase subunit a (265 aa).

Helical transmembrane passes span 26-46 (VHLD…FFFY), 88-108 (IGSL…IDLI), 132-152 (DISA…FYTI), 168-188 (PFNH…TLLA), 195-217 (FRLF…MYMA), and 231-251 (LIWA…FMML).

The protein belongs to the ATPase A chain family. F-type ATPases have 2 components, CF(1) - the catalytic core - and CF(0) - the membrane proton channel. CF(1) has five subunits: alpha(3), beta(3), gamma(1), delta(1), epsilon(1). CF(0) has three main subunits: a(1), b(2) and c(9-12). The alpha and beta chains form an alternating ring which encloses part of the gamma chain. CF(1) is attached to CF(0) by a central stalk formed by the gamma and epsilon chains, while a peripheral stalk is formed by the delta and b chains.

It is found in the cell inner membrane. Its function is as follows. Key component of the proton channel; it plays a direct role in the translocation of protons across the membrane. In Histophilus somni (strain 2336) (Haemophilus somnus), this protein is ATP synthase subunit a.